Reading from the N-terminus, the 89-residue chain is Small ribosomal subunit protein uS15 (89 aa).

It belongs to the universal ribosomal protein uS15 family. Part of the 30S ribosomal subunit. Forms a bridge to the 50S subunit in the 70S ribosome, contacting the 23S rRNA.

Its function is as follows. One of the primary rRNA binding proteins, it binds directly to 16S rRNA where it helps nucleate assembly of the platform of the 30S subunit by binding and bridging several RNA helices of the 16S rRNA. Forms an intersubunit bridge (bridge B4) with the 23S rRNA of the 50S subunit in the ribosome. The polypeptide is Small ribosomal subunit protein uS15 (Zymomonas mobilis subsp. mobilis (strain ATCC 31821 / ZM4 / CP4)).